The sequence spans 478 residues: H(+)/Cl(-) exchange transporter ClcA (478 aa).

The Cytoplasmic segment spans residues 1–32 (MTHSTQQLSPEGVAEGKRGRLIRELVNRDKTP). A helical transmembrane segment spans residues 33-69 (LIILIMAAVVGVVTGLLGVAFDRGVDWVQQQRLLALA). At 70 to 76 (NVADYAL) the chain is on the periplasmic side. The helical transmembrane segment at 77-100 (LVWPLAFIMSALLAMMGYFLVSRF) threads the bilayer. The Selectivity filter part_1 motif lies at 106 to 110 (GSGIP). Ser107 is a chloride binding site. Residues 109 to 116 (IPEIEGAM) constitute an intramembrane region (helical). Residues 117–123 (EEMRPVR) lie on the Cytoplasmic side of the membrane. The next 2 membrane-spanning stretches (helical) occupy residues 124-141 (WWRVIPVKFIGGLGTLGA) and 148-166 (EGPMVQMGGNSGRMIVDIF). A Selectivity filter part_2 motif is present at residues 146–150 (GREGP). The Cytoplasmic portion of the chain corresponds to 167 to 176 (RLRSPEARHS). 2 intramembrane regions (helical) span residues 177-189 (LLATGAAAGLSAA) and 193-201 (PLAGILFVI). Topologically, residues 202–214 (EEMRSQFRYSLVS) are cytoplasmic. Residues 215 to 232 (IKAVFIGVITSTIVYRYF) form a helical membrane-spanning segment. Topologically, residues 233-252 (NGERAIIEVGKLSDAPLNTL) are periplasmic. A helical membrane pass occupies residues 253–281 (WLYLLLGIIFGAVGVIFNALIFRTQDMFV). Residues 282 to 287 (RFHGGD) are Cytoplasmic-facing. A helical transmembrane segment spans residues 288-309 (WRKLVLIGGLLGGMCGLLALLH). Residues 310–329 (GNAVGGGFALIPIAAAGNFS) lie on the Periplasmic side of the membrane. Transmembrane regions (helical) follow at residues 330–349 (IGMLLFIFIARVITTLLCFG) and 355–376 (GIFAPMLALGTILGTAFGLSCA). The short motif at 355-359 (GIFAP) is the Selectivity filter part_3 element. 2 residues coordinate chloride: Ile356 and Phe357. Residues 377–386 (HFFPQYGIEA) lie on the Periplasmic side of the membrane. Residues 387–401 (GTFAIAGMGALFAAS) constitute an intramembrane region (helical). The note=Loop between two helices intramembrane region spans 402 to 404 (VRA). An intramembrane region (helical) is located at residues 405-416 (PLTGIVLVLEMT). Residues 417 to 421 (DNYQL) constitute an intramembrane region (note=Loop between two helices). The helical transmembrane segment at 422–438 (ILPMIVTCLGATLIAQF) threads the bilayer. The Cytoplasmic segment spans residues 439–478 (MGGKPLYSAILARTLAKQEQARATVIAQEPAVENTPQIGK). Tyr445 provides a ligand contact to chloride.

This sequence belongs to the chloride channel (TC 2.A.49) family. ClcA subfamily. As to quaternary structure, homodimer.

Its subcellular location is the cell inner membrane. It catalyses the reaction 2 chloride(in) + H(+)(out) = 2 chloride(out) + H(+)(in). Functionally, proton-coupled chloride transporter. Functions as antiport system and exchanges two chloride ions for 1 proton. Probably acts as an electrical shunt for an outwardly-directed proton pump that is linked to amino acid decarboxylation, as part of the extreme acid resistance (XAR) response. The polypeptide is H(+)/Cl(-) exchange transporter ClcA (Yersinia pestis bv. Antiqua (strain Antiqua)).